The chain runs to 609 residues: Protein tesmin/TSO1-like CXC 3 (609 aa).

The segment covering 69–84 (ESRFRSQKDVSASKEV) has biased composition (basic and acidic residues). Disordered regions lie at residues 69 to 102 (ESRFRSQKDVSASKEVGEEEALVGSEPEQSYKND), 307 to 328 (PISPKKKRRKSEQSGEGDSSCK), 457 to 477 (LFEQDEENETSGTPGTKKTQQ), and 569 to 609 (NSKR…TPHH). The region spanning 326–451 (SCKRCNCKKS…RCEGCKNAFG (126 aa)) is the CRC domain. The span at 466 to 477 (TSGTPGTKKTQQ) shows a compositional bias: polar residues.

This sequence belongs to the lin-54 family. As to expression, ubiquitous but expressed mostly in flowers and at significant levels in leaves. Detected with highest levels in developing ovules and microspores, and in petals.

The protein localises to the nucleus. In terms of biological role, plays a role in development of both male and female reproductive tissues. The protein is Protein tesmin/TSO1-like CXC 3 (TCX3) of Arabidopsis thaliana (Mouse-ear cress).